A 412-amino-acid chain; its full sequence is GTPase Obg (412 aa).

The Obg domain occupies 1 to 159 (MKFLDQAKIF…RWIWLRLKMI (159 aa)). The region spanning 160–327 (ADAGLVGLPN…ILARLFTHIR (168 aa)) is the OBG-type G domain. GTP contacts are provided by residues 166-173 (GLPNAGKS), 191-195 (FTTLH), 212-215 (DIPG), 279-282 (NKCD), and 308-310 (SGV). Ser173 and Thr193 together coordinate Mg(2+). Residues 335-412 (AVPAASPIFG…ADDEEDDAEE (78 aa)) are disordered. Over residues 385-412 (NDGDEVDEDYDDEDLEEVADDEEDDAEE) the composition is skewed to acidic residues.

It belongs to the TRAFAC class OBG-HflX-like GTPase superfamily. OBG GTPase family. In terms of assembly, monomer. The cofactor is Mg(2+).

The protein localises to the cytoplasm. Functionally, an essential GTPase which binds GTP, GDP and possibly (p)ppGpp with moderate affinity, with high nucleotide exchange rates and a fairly low GTP hydrolysis rate. Plays a role in control of the cell cycle, stress response, ribosome biogenesis and in those bacteria that undergo differentiation, in morphogenesis control. This Paramagnetospirillum magneticum (strain ATCC 700264 / AMB-1) (Magnetospirillum magneticum) protein is GTPase Obg.